A 385-amino-acid polypeptide reads, in one-letter code: MKMLPGVGVFGTGSSARVLVPLLRAEGFTVEALWGKTEEEAKQLAEEMNIAFYTSRTDDILLHQDVDLVCISIPPPLTRQISVKALGIGKNVVCEKAATSVDAFRMVTASRYYPQLMSLVGNVLRFLPAFVRMKQLISEHYVGAVMICDARIYSGSLLSPSYGWICDELMGGGGLHTMGTYIVDLLTHLTGRRAEKVHGLLKTFVRQNAAIRGIRHVTSDDFCFFQMLMGGGVCSTVTLNFNMPGAFVHEVMVVGSAGRLVARGADLYGQKNSATQEELLLRDSLAVGAGLPEQGPQDVPLLYLKGMVYMVQALRQSFQGQGDRRTWDRTPVSMAASFEDGLYMQSVVDAIKRSSRSGEWEAVEVLTEEPDTNQNLCEALQRNNL.

The N-terminal stretch at 1-25 (MKMLPGVGVFGTGSSARVLVPLLRA) is a signal peptide.

It belongs to the Gfo/Idh/MocA family.

It is found in the secreted. It localises to the extracellular space. The protein localises to the extracellular matrix. Promotes matrix assembly. This chain is Glucose-fructose oxidoreductase domain-containing protein 2 (GFOD2), found in Homo sapiens (Human).